We begin with the raw amino-acid sequence, 662 residues long: MVLSEVDIAKADPAAASHPVLLNGDANVAQKNLGSVAENNLCSQYEEKVRPCIDLIDSLRALGVEQDLALPAIAVIGDQSSGKSSVLEALSGVALPRGSGIVTRCPLVLKLKKLVNEDKWRGKVSYQDYEIEISDASEVEKEINKAQNTIAGEGMGISHELITLEISSRDVPDLTLIDLPGITRVAVGNQPADIGYKIKTLIKKYIQRQETISLVVVPSNVDIATTEALSMAQEVDPEGDRTIGILTKPDLVDKGTEDKVVDVVRNLVFHLKKGYMIVKCRGQQEIQDQLSLSEALQREKIFFEDHPYFRDLLEEGKATVPCLAEKLTSELITHICKSLPLLENQIRESHQRITEELQKYGVDVPEDENEKMFFLIDKINAFNQDITALIQGEETVGEEDIRLFTRLRHEFHKWSIIIENNFQEGHKILSRKIQKFENQYRGRGLPGFVNYRTFETIVKQQIKALEEPAVDMLHTVTDMVRLAFTDVSIKNFEEFFNLHRTAKSKIEDIRAEQEREGEKLIRLHFQMEQIVYCQDQVYRGALQKVREKELEEEKKKKSWDFGAFQSSSATDSSMEEIFQHLMAYHQEASKRISSHIPLIIQFFMLQTYGQQLQKAMLQLLQDKDTYSWLLKERGDTSDKRKFLKERLARLTQARRRLAQFPG.

M1 carries the post-translational modification N-acetylmethionine. The 274-residue stretch at 67-340 (DLALPAIAVI…LITHICKSLP (274 aa)) folds into the Dynamin-type G domain. Positions 77–84 (GDQSSGKS) are G1 motif. GTP is bound at residue 77–84 (GDQSSGKS). Residues 102-104 (VTR) form a G2 motif region. Residues 178–181 (DLPG) form a G3 motif region. Residues 178 to 182 (DLPGI) and 247 to 250 (TKPD) each bind GTP. Positions 247–250 (TKPD) are G4 motif. A G5 motif region spans residues 279–282 (KCRG). The interval 341–366 (LLENQIRESHQRITEELQKYGVDVPE) is bundle signaling element (BSE). Residues 366–533 (EDENEKMFFL…HFQMEQIVYC (168 aa)) are middle domain. The interval 367–632 (DENEKMFFLI…KDTYSWLLKE (266 aa)) is stalk. The segment at 554–557 (KKKK) is critical for lipid-binding. One can recognise a GED domain in the interval 574 to 662 (MEEIFQHLMA…ARRRLAQFPG (89 aa)).

It belongs to the TRAFAC class dynamin-like GTPase superfamily. Dynamin/Fzo/YdjA family. In terms of assembly, homooligomer. Oligomerizes into multimeric filamentous or ring-like structures by virtue of its stalk domain. Oligomerization is critical for GTPase activity, protein stability, and recognition of viral target structures. Interacts with TRPC1, TRPC3, TRPC4, TRPC5, TRPC6 and TRPC7. Interacts with HSPA5. Interacts with TUBB/TUBB5. Interacts with DDX39A and DDX39B. In terms of processing, ISGylated.

The protein localises to the cytoplasm. It localises to the endoplasmic reticulum membrane. Its subcellular location is the perinuclear region. Its function is as follows. Interferon-induced dynamin-like GTPase with antiviral activity. The protein is Interferon-induced GTP-binding protein Mx1 (MX1) of Pongo abelii (Sumatran orangutan).